The following is a 240-amino-acid chain: Large ribosomal subunit protein uL1 (240 aa).

This sequence belongs to the universal ribosomal protein uL1 family. As to quaternary structure, part of the 50S ribosomal subunit.

Functionally, binds directly to 23S rRNA. The L1 stalk is quite mobile in the ribosome, and is involved in E site tRNA release. Its function is as follows. Protein L1 is also a translational repressor protein, it controls the translation of the L11 operon by binding to its mRNA. In Streptomyces griseus subsp. griseus (strain JCM 4626 / CBS 651.72 / NBRC 13350 / KCC S-0626 / ISP 5235), this protein is Large ribosomal subunit protein uL1.